An 872-amino-acid chain; its full sequence is N-acetyltransferase eso1 (872 aa).

The interval 1–591 (MELGKSKFSW…KQVKPKTYGR (591 aa)) is polymerase type-Y. Positions 29-285 (VAHIDQDAFY…LKITDIRMLG (257 aa)) constitute a UmuC domain. The UBZ3-type zinc-finger motif lies at 533 to 567 (SADETYTCEECEQKITLSERNEHEDYHIALSISRK). Cysteine 540, cysteine 543, histidine 555, and histidine 559 together coordinate Zn(2+). The interval 569–602 (RYNNLVPPSHDKPKQVKPKTYGRKTGSKHYAPLS) is disordered. Positions 583–595 (QVKPKTYGRKTGS) are enriched in basic residues. An acetyltransferase region spans residues 592–872 (KTGSKHYAPL…KSLRYAVYES (281 aa)). A CCHH-type zinc finger spans residues 653-677 (VTCSECSMEYNSTSEEDILLHSRFH).

It in the C-terminal section; belongs to the acetyltransferase family. ECO subfamily. This sequence in the N-terminal section; belongs to the DNA polymerase type-Y family. Interacts with pds5.

It is found in the nucleus. Functionally, probable acetyltransferase required for the establishment of sister chromatid cohesion and couple the processes of cohesion and DNA replication to ensure that only sister chromatids become paired together. In contrast to the structural cohesins, the deposition and establishment factors are required only during S phase. The relevance of acetyltransferase function remains unclear. The sequence is that of N-acetyltransferase eso1 (eso1) from Schizosaccharomyces pombe (strain 972 / ATCC 24843) (Fission yeast).